The sequence spans 461 residues: Carbamoyl phosphate synthase arginine-specific small chain (461 aa).

The Glutamine amidotransferase type-1 domain occupies His240–Asn427. Residue Cys316 is the Nucleophile of the active site. Catalysis depends on residues His400 and Glu402.

The protein belongs to the CarA family. Heterodimer composed of 2 chains; the small (or glutamine) chain promotes the hydrolysis of glutamine to ammonia, which is used by the large (or ammonia) chain to synthesize carbamoyl phosphate.

Its subcellular location is the cytoplasm. The catalysed reaction is hydrogencarbonate + L-glutamine + 2 ATP + H2O = carbamoyl phosphate + L-glutamate + 2 ADP + phosphate + 2 H(+). It carries out the reaction L-glutamine + H2O = L-glutamate + NH4(+). Its pathway is amino-acid biosynthesis; L-arginine biosynthesis; carbamoyl phosphate from bicarbonate: step 1/1. Small subunit of the arginine-specific carbamoyl phosphate synthase (CPSase). CPSase catalyzes the formation of carbamoyl phosphate from the ammonia moiety of glutamine, carbonate, and phosphate donated by ATP, constituting the first step of 2 biosynthetic pathways, one leading to arginine and/or urea and the other to pyrimidine nucleotides. The small subunit (glutamine amidotransferase) binds and cleaves glutamine to supply the large subunit with the substrate ammonia. The protein is Carbamoyl phosphate synthase arginine-specific small chain (CPA1) of Chaetomium globosum (strain ATCC 6205 / CBS 148.51 / DSM 1962 / NBRC 6347 / NRRL 1970) (Soil fungus).